The following is a 332-amino-acid chain: Glycerol-3-phosphate dehydrogenase [NAD(P)+] (332 aa).

The NADPH site is built by W13, K34, and K108. Sn-glycerol 3-phosphate is bound by residues K108, G136, and S138. NADPH is bound at residue A140. Residues K191, D244, S254, R255, and N256 each coordinate sn-glycerol 3-phosphate. K191 acts as the Proton acceptor in catalysis. R255 serves as a coordination point for NADPH. Positions 279 and 281 each coordinate NADPH.

It belongs to the NAD-dependent glycerol-3-phosphate dehydrogenase family.

It localises to the cytoplasm. It carries out the reaction sn-glycerol 3-phosphate + NAD(+) = dihydroxyacetone phosphate + NADH + H(+). It catalyses the reaction sn-glycerol 3-phosphate + NADP(+) = dihydroxyacetone phosphate + NADPH + H(+). It participates in membrane lipid metabolism; glycerophospholipid metabolism. Functionally, catalyzes the reduction of the glycolytic intermediate dihydroxyacetone phosphate (DHAP) to sn-glycerol 3-phosphate (G3P), the key precursor for phospholipid synthesis. The sequence is that of Glycerol-3-phosphate dehydrogenase [NAD(P)+] from Francisella tularensis subsp. tularensis (strain FSC 198).